The sequence spans 400 residues: Acetate kinase (400 aa).

Residue Asn7 participates in Mg(2+) binding. An ATP-binding site is contributed by Lys14. Position 91 (Arg91) interacts with substrate. Asp148 (proton donor/acceptor) is an active-site residue. Residues 208–212, 283–285, and 331–335 each bind ATP; these read HVGNG, DMR, and GVGEN. Glu385 serves as a coordination point for Mg(2+).

The protein belongs to the acetokinase family. Homodimer. Mg(2+) serves as cofactor. The cofactor is Mn(2+).

The protein localises to the cytoplasm. It carries out the reaction acetate + ATP = acetyl phosphate + ADP. It functions in the pathway metabolic intermediate biosynthesis; acetyl-CoA biosynthesis; acetyl-CoA from acetate: step 1/2. Catalyzes the formation of acetyl phosphate from acetate and ATP. Can also catalyze the reverse reaction. This is Acetate kinase from Parabacteroides distasonis (strain ATCC 8503 / DSM 20701 / CIP 104284 / JCM 5825 / NCTC 11152).